A 307-amino-acid chain; its full sequence is MSSPARPFTVRAPASSANLGPGFDSLGLSVPLYTTLRVTPQDKAEVVPLGTELADTPADESNYVYRAMTLAAKRAGRTLPPARVEIETEVPLARGLGSSAAALVAGVVAGNELLGRPLDDETVLDVTAREEGHPDNVAPALFGGIVVATLDKLGTHYVRLDPPAHLGVTVLVPDFELSTSKARAVLPREYSRADTVHALSHAALLAAALAQGRLDLLRHAMQDYVHQVWRAPLVPGLSDILEHAHEYGALGAALSGAGPTVLCFHDQRGSTATLHHYLHDVMTKNGLSGRVMDFPIDAAGTVVEHAK.

91–101 is a binding site for ATP; that stretch reads PLARGLGSSAA.

This sequence belongs to the GHMP kinase family. Homoserine kinase subfamily.

The protein localises to the cytoplasm. The enzyme catalyses L-homoserine + ATP = O-phospho-L-homoserine + ADP + H(+). Its pathway is amino-acid biosynthesis; L-threonine biosynthesis; L-threonine from L-aspartate: step 4/5. Functionally, catalyzes the ATP-dependent phosphorylation of L-homoserine to L-homoserine phosphate. This Deinococcus radiodurans (strain ATCC 13939 / DSM 20539 / JCM 16871 / CCUG 27074 / LMG 4051 / NBRC 15346 / NCIMB 9279 / VKM B-1422 / R1) protein is Homoserine kinase.